The chain runs to 1133 residues: Trafficking protein particle complex subunit 11 (1133 aa).

An N6-acetyllysine modification is found at lysine 245.

It belongs to the TRAPPC11 family. Component of the multisubunit TRAPP (transport protein particle) complex, which includes at least TRAPPC2, TRAPPC2L, TRAPPC3, TRAPPC3L, TRAPPC4, TRAPPC5, TRAPPC8, TRAPPC9, TRAPPC10, TRAPPC11 and TRAPPC12.

The protein resides in the golgi apparatus. The protein localises to the cis-Golgi network. In terms of biological role, involved in endoplasmic reticulum to Golgi apparatus trafficking at a very early stage. This Homo sapiens (Human) protein is Trafficking protein particle complex subunit 11 (TRAPPC11).